Reading from the N-terminus, the 404-residue chain is Cysteine desulfurase IscS (404 aa).

Pyridoxal 5'-phosphate is bound by residues 75 to 76 (AT), Asn-155, Gln-183, and 203 to 205 (SAH). Lys-206 bears the N6-(pyridoxal phosphate)lysine mark. Thr-243 provides a ligand contact to pyridoxal 5'-phosphate. Cys-328 functions as the Cysteine persulfide intermediate in the catalytic mechanism. Position 328 (Cys-328) interacts with [2Fe-2S] cluster.

Belongs to the class-V pyridoxal-phosphate-dependent aminotransferase family. NifS/IscS subfamily. As to quaternary structure, homodimer. Forms a heterotetramer with IscU, interacts with other sulfur acceptors. Pyridoxal 5'-phosphate is required as a cofactor.

The protein resides in the cytoplasm. The enzyme catalyses (sulfur carrier)-H + L-cysteine = (sulfur carrier)-SH + L-alanine. The protein operates within cofactor biosynthesis; iron-sulfur cluster biosynthesis. Its function is as follows. Master enzyme that delivers sulfur to a number of partners involved in Fe-S cluster assembly, tRNA modification or cofactor biosynthesis. Catalyzes the removal of elemental sulfur atoms from cysteine to produce alanine. Functions as a sulfur delivery protein for Fe-S cluster synthesis onto IscU, an Fe-S scaffold assembly protein, as well as other S acceptor proteins. The sequence is that of Cysteine desulfurase IscS from Neisseria meningitidis serogroup C / serotype 2a (strain ATCC 700532 / DSM 15464 / FAM18).